Consider the following 338-residue polypeptide: Formamidase (338 aa).

The 243-residue stretch at valine 15 to proline 257 folds into the CN hydrolase domain. Glutamate 61 (proton acceptor) is an active-site residue. Residue lysine 130 is the Proton donor of the active site. The Nucleophile role is filled by cysteine 163.

This sequence belongs to the carbon-nitrogen hydrolase superfamily. Aliphatic amidase family.

The enzyme catalyses formamide + H2O = formate + NH4(+). Functionally, is an aliphatic amidase with a restricted substrate specificity, as it only hydrolyzes formamide. The sequence is that of Formamidase from Pseudomonas syringae pv. syringae (strain B728a).